The chain runs to 737 residues: tRNA (guanine(27)-N(2))-dimethyltransferase (737 aa).

Residues 1 to 10 (MENMAEEELL) show a composition bias toward acidic residues. Positions 1–65 (MENMAEEELL…ASAPVPAPAL (65 aa)) are disordered. Residues 17–49 (VVQVPVPTPTPDSARVPAPAPDSAPVSASTPAP) are compositionally biased toward low complexity. Threonine 24 is subject to Phosphothreonine. A compositionally biased stretch (pro residues) spans 50 to 62 (ASAPTPASAPVPA). Residue serine 72 is modified to Phosphoserine. Positions 141-145 (HKLHR) match the Nucleolar localization signal motif. Residues 190–212 (YHCIICSATITRRTDMLGHVRRH) form a C2H2-type zinc finger. The region spanning 233 to 692 (EILKEADTDV…APLMQFKSIL (460 aa)) is the Trm1 methyltransferase domain. Arginine 266, aspartate 313, aspartate 363, and alanine 364 together coordinate S-adenosyl-L-methionine. Zn(2+)-binding residues include cysteine 494, cysteine 497, cysteine 519, and cysteine 521. Lysine 589 participates in a covalent cross-link: Glycyl lysine isopeptide (Lys-Gly) (interchain with G-Cter in SUMO2). Phosphoserine is present on serine 616.

This sequence belongs to the class I-like SAM-binding methyltransferase superfamily. Trm1 family.

It is found in the nucleus. The protein resides in the nucleolus. The catalysed reaction is guanosine(27) in tRNA(Tyr) + 2 S-adenosyl-L-methionine = N(2)-dimethylguanosine(27) in tRNA(Tyr) + 2 S-adenosyl-L-homocysteine + 2 H(+). Its function is as follows. Specifically dimethylates a single guanine residue at position 27 of tRNA(Tyr) using S-adenosyl-L-methionine as donor of the methyl groups. Dimethylation at position 27 of tRNA(Tyr) is required for efficient translation of tyrosine codons. Also required to maintain 3-(3-amino-3-carboxypropyl)uridine (acp3U) in the D-loop of several cytoplasmic tRNAs. This is tRNA (guanine(27)-N(2))-dimethyltransferase (TRMT1L) from Bos taurus (Bovine).